The primary structure comprises 276 residues: Large ribosomal subunit protein uL2 (276 aa).

Residues 219 to 276 (TVRGSAMNPNDHPHGGGEGRTSIGRPAPVTPWGKPALGYKTRDSKKASNKMIVSRRKK) form a disordered region.

The protein belongs to the universal ribosomal protein uL2 family. In terms of assembly, part of the 50S ribosomal subunit. Forms a bridge to the 30S subunit in the 70S ribosome.

One of the primary rRNA binding proteins. Required for association of the 30S and 50S subunits to form the 70S ribosome, for tRNA binding and peptide bond formation. It has been suggested to have peptidyltransferase activity; this is somewhat controversial. Makes several contacts with the 16S rRNA in the 70S ribosome. The polypeptide is Large ribosomal subunit protein uL2 (Alkaliphilus oremlandii (strain OhILAs) (Clostridium oremlandii (strain OhILAs))).